Here is a 234-residue protein sequence, read N- to C-terminus: Phosphoribosylaminoimidazole-succinocarboxamide synthase (234 aa).

Belongs to the SAICAR synthetase family.

It carries out the reaction 5-amino-1-(5-phospho-D-ribosyl)imidazole-4-carboxylate + L-aspartate + ATP = (2S)-2-[5-amino-1-(5-phospho-beta-D-ribosyl)imidazole-4-carboxamido]succinate + ADP + phosphate + 2 H(+). It participates in purine metabolism; IMP biosynthesis via de novo pathway; 5-amino-1-(5-phospho-D-ribosyl)imidazole-4-carboxamide from 5-amino-1-(5-phospho-D-ribosyl)imidazole-4-carboxylate: step 1/2. The chain is Phosphoribosylaminoimidazole-succinocarboxamide synthase from Clostridium botulinum (strain Loch Maree / Type A3).